Reading from the N-terminus, the 479-residue chain is Ribosomal RNA small subunit methyltransferase F (479 aa).

S-adenosyl-L-methionine contacts are provided by residues 125-131 (AAAPGSK), E149, D176, and D194. C247 functions as the Nucleophile in the catalytic mechanism.

It belongs to the class I-like SAM-binding methyltransferase superfamily. RsmB/NOP family.

The protein localises to the cytoplasm. The catalysed reaction is cytidine(1407) in 16S rRNA + S-adenosyl-L-methionine = 5-methylcytidine(1407) in 16S rRNA + S-adenosyl-L-homocysteine + H(+). Specifically methylates the cytosine at position 1407 (m5C1407) of 16S rRNA. This is Ribosomal RNA small subunit methyltransferase F from Escherichia coli O6:H1 (strain CFT073 / ATCC 700928 / UPEC).